Reading from the N-terminus, the 88-residue chain is Thioredoxin-2 (88 aa).

The region spanning 2-88 (SRVIHISSNE…YRNGAKVSEF (87 aa)) is the Thioredoxin domain. Catalysis depends on nucleophile residues C31 and C34. Residues C31 and C34 are joined by a disulfide bond.

Belongs to the thioredoxin family.

Its function is as follows. Participates in various redox reactions through the reversible oxidation of its active center dithiol to a disulfide and catalyzes dithiol-disulfide exchange reactions. The polypeptide is Thioredoxin-2 (trxB) (Dictyostelium discoideum (Social amoeba)).